Consider the following 476-residue polypeptide: Fatty acid hydroperoxide lyase, chloroplastic (476 aa).

A helical transmembrane segment spans residues 280–300; that stretch reads LLFILGFNAFGGFSIFLPTLL. Residue C438 coordinates heme.

The protein belongs to the cytochrome P450 family. It depends on heme as a cofactor. As to expression, highly expressed in developing flowers and in young leaves. Detected in stems and immature green fruits, but not in mature green and red fruits.

It is found in the plastid. The protein resides in the chloroplast outer membrane. With respect to regulation, reversibly inhibited by nordihydroguaiaretic acid (NDGA) and irreversibly by salicylic acid. Its function is as follows. Cytochrome P450 of the CYP74B subfamily involved in the biosynthesis of traumatin and C6 aldehydes. Metabolizes 13- but not 9-hydroperoxides of linoleic and linolenic acids. Can use 15S-hydroperoxy-11(Z),13(E),17(Z)-eicosatrienoic acid (15-HPET) and 13S-hydroperoxy-9(Z),11(E),15(Z)-octadecatrienoic acid (13-HPOT) as substrates, but only 5% activity with 13S-hydroperoxy-9(Z),11(E)-octadecadienoic acid (13-HPOD). Produces n-hexanal and 12-oxo-9(Z)-dodecanoic acid from 13-HPOD. The polypeptide is Fatty acid hydroperoxide lyase, chloroplastic (Solanum lycopersicum (Tomato)).